The chain runs to 195 residues: Flagellar transcriptional regulator FlhC (195 aa).

4 residues coordinate Zn(2+): cysteine 137, cysteine 140, cysteine 157, and cysteine 160. Residues 165-195 (RAGSARRKTTTRKAVAPTHKTTAASRKAVVA) are disordered.

It belongs to the FlhC family. As to quaternary structure, heterohexamer composed of two FlhC and four FlhD subunits. Each FlhC binds a FlhD dimer, forming a heterotrimer, and a hexamer assembles by dimerization of two heterotrimers. It depends on Zn(2+) as a cofactor.

Its subcellular location is the cytoplasm. Functionally, functions in complex with FlhD as a master transcriptional regulator that regulates transcription of several flagellar and non-flagellar operons by binding to their promoter region. Activates expression of class 2 flagellar genes, including fliA, which is a flagellum-specific sigma factor that turns on the class 3 genes. Also regulates genes whose products function in a variety of physiological pathways. The polypeptide is Flagellar transcriptional regulator FlhC (Thauera aminoaromatica).